Here is a 222-residue protein sequence, read N- to C-terminus: Small ribosomal subunit protein uS5 (222 aa).

A disordered region spans residues 1–41; the sequence is MAEQAGAGSAQDNRGGGRDDRGGRGRRDDRGGRGGRDDREK. A compositionally biased stretch (basic and acidic residues) spans 15–41; the sequence is GGGRDDRGGRGRRDDRGGRGGRDDREK. Residues 44 to 107 enclose the S5 DRBM domain; that stretch reads YLERVVTINR…EEARKNFFRV (64 aa).

It belongs to the universal ribosomal protein uS5 family. As to quaternary structure, part of the 30S ribosomal subunit. Contacts proteins S4 and S8.

In terms of biological role, with S4 and S12 plays an important role in translational accuracy. Functionally, located at the back of the 30S subunit body where it stabilizes the conformation of the head with respect to the body. The polypeptide is Small ribosomal subunit protein uS5 (Mycolicibacterium gilvum (strain PYR-GCK) (Mycobacterium gilvum (strain PYR-GCK))).